Reading from the N-terminus, the 115-residue chain is UPF0738 protein SH1953 (115 aa).

The protein belongs to the UPF0738 family.

In Staphylococcus haemolyticus (strain JCSC1435), this protein is UPF0738 protein SH1953.